An 89-amino-acid polypeptide reads, in one-letter code: Defensin-like protein 78 (89 aa).

Residues M1–A30 form the signal peptide. 4 disulfide bridges follow: C40/C75, C44/C67, C52/C73, and C56/C74.

The protein belongs to the DEFL family.

The protein resides in the secreted. The chain is Defensin-like protein 78 from Arabidopsis thaliana (Mouse-ear cress).